A 234-amino-acid chain; its full sequence is UPF0173 metal-dependent hydrolase Meso_1362 (234 aa).

The protein belongs to the UPF0173 family.

In Chelativorans sp. (strain BNC1), this protein is UPF0173 metal-dependent hydrolase Meso_1362.